Here is a 79-residue protein sequence, read N- to C-terminus: MPKRILQGVVVGDKNEKTVVVRVERRFAHPLLQKTVRRSKKYKAHDENNQYKIGDTVSIEECAPISKDKRWTVISAQGQ.

It belongs to the universal ribosomal protein uS17 family. As to quaternary structure, part of the 30S ribosomal subunit.

In terms of biological role, one of the primary rRNA binding proteins, it binds specifically to the 5'-end of 16S ribosomal RNA. This chain is Small ribosomal subunit protein uS17, found in Rhizobium leguminosarum bv. trifolii (strain WSM2304).